We begin with the raw amino-acid sequence, 1334 residues long: SCAR-like protein 2 (1334 aa).

The segment covering 197-207 (KTGNFQREKKS) has biased composition (basic and acidic residues). Disordered stretches follow at residues 197–281 (KTGN…SSFS), 294–331 (DTKP…GTSA), 481–516 (PDSS…ADAP), 568–602 (PNQS…SSYT), 643–668 (DKPT…TVES), 791–832 (STSH…KNII), 931–956 (FEKK…YSEK), 1000–1026 (FQLL…GRSY), 1248–1268 (SGQQ…DTKN), and 1280–1304 (RSKT…TANS). The span at 241-256 (VQLTSRHFATPSTDGR) shows a compositional bias: polar residues. The segment covering 310-319 (SNNNLHKLSN) has biased composition (low complexity). The segment covering 320 to 330 (TPLHTRLNGTS) has biased composition (polar residues). Basic and acidic residues predominate over residues 574–595 (DSKEIPDSKAEDAPIDSPEKLE). Residues 791 to 823 (STSHSSETNQSTVRTPDTVIGQTEGSTGCSTSF) show a composition bias toward polar residues. The segment covering 945–956 (SSLFSSSHYSEK) has biased composition (low complexity). Over residues 1248–1260 (SGQQKLNGHEKSK) the composition is skewed to basic and acidic residues. In terms of domain architecture, WH2 spans 1271–1289 (EREELLQQIRSKTFNLRRT). Low complexity predominate over residues 1289 to 1304 (TNASKTNTSSPTTANS).

This sequence belongs to the SCAR/WAVE family.

It localises to the cytoplasm. The protein localises to the cytoskeleton. Its function is as follows. Involved in regulation of actin and microtubule organization. Part of a WAVE complex that activates the Arp2/3 complex. This is SCAR-like protein 2 from Oryza sativa subsp. japonica (Rice).